Here is a 156-residue protein sequence, read N- to C-terminus: Arginine repressor (156 aa).

It belongs to the ArgR family.

It is found in the cytoplasm. The protein operates within amino-acid biosynthesis; L-arginine biosynthesis [regulation]. Regulates arginine biosynthesis genes. This Vibrio atlanticus (strain LGP32) (Vibrio splendidus (strain Mel32)) protein is Arginine repressor.